The following is a 133-amino-acid chain: Antifungal protein ginkbilobin-like protein 2 (133 aa).

The first 24 residues, 1-24, serve as a signal peptide directing secretion; the sequence is MSMGSFGFALAVMVLAVLVASAAG. The 106-residue stretch at 28 to 133 folds into the Gnk2-homologous domain; sequence TNLVSSACNG…CFIRYEQYSI (106 aa). Asparagine 36 contributes to the alpha-D-mannopyranose binding site. Disulfide bonds link cysteine 87–cysteine 96 and cysteine 99–cysteine 124. Alpha-D-mannopyranose is bound by residues arginine 118 and glutamate 129.

Functionally, exerts antifungal activity through its carbohydrate-binding specificity. The polypeptide is Antifungal protein ginkbilobin-like protein 2 (Picea glauca (White spruce)).